Here is a 274-residue protein sequence, read N- to C-terminus: Sulfur carrier protein FdhD (274 aa).

Residue cysteine 121 is the Cysteine persulfide intermediate of the active site. Mo-bis(molybdopterin guanine dinucleotide) is bound at residue 258–263; that stretch reads FSKPGR.

This sequence belongs to the FdhD family.

It localises to the cytoplasm. Its function is as follows. Required for formate dehydrogenase (FDH) activity. Acts as a sulfur carrier protein that transfers sulfur from IscS to the molybdenum cofactor prior to its insertion into FDH. The chain is Sulfur carrier protein FdhD from Yersinia pseudotuberculosis serotype O:1b (strain IP 31758).